The following is a 202-amino-acid chain: Small ribosomal subunit protein uS4 (202 aa).

The disordered stretch occupies residues 22 to 43 (TRKSARRAYPPGQHGQNRKKRS). The S4 RNA-binding domain occupies 90–152 (MRLDNTVFRL…APSRKLVENN (63 aa)).

This sequence belongs to the universal ribosomal protein uS4 family. In terms of assembly, part of the 30S ribosomal subunit. Contacts protein S5. The interaction surface between S4 and S5 is involved in control of translational fidelity.

In terms of biological role, one of the primary rRNA binding proteins, it binds directly to 16S rRNA where it nucleates assembly of the body of the 30S subunit. With S5 and S12 plays an important role in translational accuracy. The sequence is that of Small ribosomal subunit protein uS4 from Nostoc sp. (strain PCC 7120 / SAG 25.82 / UTEX 2576).